Here is an 85-residue protein sequence, read N- to C-terminus: Small ribosomal subunit protein bS18A (85 aa).

This sequence belongs to the bacterial ribosomal protein bS18 family. As to quaternary structure, part of the 30S ribosomal subunit. Forms a tight heterodimer with protein bS6.

Binds as a heterodimer with protein bS6 to the central domain of the 16S rRNA, where it helps stabilize the platform of the 30S subunit. The protein is Small ribosomal subunit protein bS18A of Mycolicibacterium smegmatis (strain ATCC 700084 / mc(2)155) (Mycobacterium smegmatis).